The primary structure comprises 561 residues: NAD(P)H-quinone oxidoreductase chain 4 2 (561 aa).

14 helical membrane passes run 6–26 (FPWLTTIVLLPLLAALLIPFI), 36–56 (WYGLGVGAIDFALMCYVFWKY), 87–107 (LSMPLVLLAGLVTTLSIFAAW), 115–135 (LFYFLMLVLYSAQIGVFVAQD), 136–156 (LMLLFIMWELELVPVYLLISI), 169–189 (FLLYTAAASIFILVAALGMAL), 210–230 (AFELLLYLGLLITFGVKLAVF), 244–264 (SAPVSMILAGVLLKMGGYGLI), 275–295 (HVYFAPVLAILGVVNIVYGGL), 312–332 (VAHMGFVLLGIASFTDLGISG), 333–353 (ALLQMISHGLIAAVLFFLAGV), 376–396 (IFALFTISAMASLALPGMSGF), 419–439 (VTVFLAAVGLILTPIYLLSML), and 490–510 (VAIAACFLVLIIGIGLYPKIA).

Belongs to the complex I subunit 4 family.

It is found in the cellular thylakoid membrane. The catalysed reaction is a plastoquinone + NADH + (n+1) H(+)(in) = a plastoquinol + NAD(+) + n H(+)(out). It catalyses the reaction a plastoquinone + NADPH + (n+1) H(+)(in) = a plastoquinol + NADP(+) + n H(+)(out). Its function is as follows. NDH-1 shuttles electrons from NAD(P)H, via FMN and iron-sulfur (Fe-S) centers, to quinones in the respiratory chain. The immediate electron acceptor for the enzyme in this species is believed to be plastoquinone. Couples the redox reaction to proton translocation (for every two electrons transferred, four hydrogen ions are translocated across the cytoplasmic membrane), and thus conserves the redox energy in a proton gradient. In Trichodesmium erythraeum (strain IMS101), this protein is NAD(P)H-quinone oxidoreductase chain 4 2.